Here is a 693-residue protein sequence, read N- to C-terminus: Polyribonucleotide nucleotidyltransferase (693 aa).

Residues aspartate 489 and aspartate 495 each contribute to the Mg(2+) site. Residues 556 to 615 (PQIHVMNINPAKIKDVVGRGGATVKGIVEKTGAQIDTSDSGEVKVFAKDKKSMDMAVAMI) enclose the KH domain. One can recognise an S1 motif domain in the interval 625-693 (GQVYKGKIVK…GRVKLSLVAR (69 aa)).

This sequence belongs to the polyribonucleotide nucleotidyltransferase family. Component of the RNA degradosome, which is a multiprotein complex involved in RNA processing and mRNA degradation. Mg(2+) serves as cofactor.

It is found in the cytoplasm. The enzyme catalyses RNA(n+1) + phosphate = RNA(n) + a ribonucleoside 5'-diphosphate. Involved in mRNA degradation. Catalyzes the phosphorolysis of single-stranded polyribonucleotides processively in the 3'- to 5'-direction. This chain is Polyribonucleotide nucleotidyltransferase, found in Francisella tularensis subsp. tularensis (strain FSC 198).